Here is a 338-residue protein sequence, read N- to C-terminus: MAAVQAPGEKINIQAGETTQVGDTDQQRNDWPEEDRLPERSWRQKCASYVLALRPWSFSASLTPVALGSALAYRSQGVLDPRLLLGCAVAVLAVHGAGNLVNTYYDFSKGIDHKKSDDRTLVDRILEPQDVVRFGVFLYTLGCVCAAYLYYLSTLKLEHLALIYFGGLSGSFLYTGGIGFKYVALGDLVILITFGPLAVMFAYAVQVGSLAIFPLVYAIPLALSTEAILHSNNTRDMESDREAGIVTLAILIGPTLSYILYNTLLFLPYLIFTILATHCSISLALPLLTSPMAFSLERQFRSQAFNKLPQRTAKLNLLLGLFYVFGIILAPAGSLPRL.

The segment at Met-1 to Glu-39 is disordered. Position 2 is an N-acetylalanine (Ala-2). Polar residues predominate over residues Ala-15 to Thr-24. A compositionally biased stretch (basic and acidic residues) spans Asp-25–Glu-39. The next 8 helical transmembrane spans lie at Leu-83–Thr-103, Phe-134–Thr-154, Leu-160–Phe-180, Leu-188–Gly-208, Ser-209–Leu-229, Ile-245–Leu-267, Thr-277–Glu-297, and Leu-315–Leu-335.

It belongs to the UbiA prenyltransferase family. Interacts with HMGCR and SOAT1.

The protein resides in the endoplasmic reticulum membrane. Its subcellular location is the golgi apparatus membrane. It is found in the mitochondrion membrane. It catalyses the reaction menadiol + (2E,6E,10E)-geranylgeranyl diphosphate = menaquinol-4 + diphosphate. The catalysed reaction is all-trans-decaprenyl diphosphate + 4-hydroxybenzoate = 4-hydroxy-3-(all-trans-decaprenyl)benzoate + diphosphate. It functions in the pathway quinol/quinone metabolism; menaquinone biosynthesis. The protein operates within cofactor biosynthesis; ubiquinone biosynthesis. Prenyltransferase that mediates the formation of menaquinone-4 (MK-4) and coenzyme Q10. MK-4 is a vitamin K2 isoform required for endothelial cell development. Mediates the conversion of phylloquinone (PK) into MK-4, probably by cleaving the side chain of phylloquinone (PK) to release 2-methyl-1,4-naphthoquinone (menadione; K3) and then prenylating it with geranylgeranyl pyrophosphate (GGPP) to form MK-4. Also plays a role in cardiovascular development independently of MK-4 biosynthesis, by acting as a coenzyme Q10 biosynthetic enzyme: coenzyme Q10, also named ubiquinone, plays an important antioxidant role in the cardiovascular system. Mediates biosynthesis of coenzyme Q10 in the Golgi membrane, leading to protect cardiovascular tissues from NOS3/eNOS-dependent oxidative stress. This Rattus norvegicus (Rat) protein is UbiA prenyltransferase domain-containing protein 1 (Ubiad1).